The following is a 275-amino-acid chain: Methylglyoxal reductase DkgA (275 aa).

The Proton donor role is filled by Y51. Residue H107 coordinates substrate. 187–241 (SPLAQGGKGVFDQKVIRDLADKYGKTPAQIVIRWHLDSGLVVIPKSVTPSRIAEN) is a binding site for NADP(+).

It belongs to the aldo/keto reductase family. As to quaternary structure, monomer.

It localises to the cytoplasm. The enzyme catalyses hydroxyacetone + NADP(+) = methylglyoxal + NADPH + H(+). Functionally, aldo-keto reductase that significantly contributes to cellular methylglyoxal detoxification by catalyzing the NADPH-dependent conversion of methylglyoxal to acetol. The polypeptide is Methylglyoxal reductase DkgA (Escherichia coli O157:H7).